We begin with the raw amino-acid sequence, 98 residues long: UPF0251 protein Sputw3181_3483 (98 aa).

The protein belongs to the UPF0251 family.

The chain is UPF0251 protein Sputw3181_3483 from Shewanella sp. (strain W3-18-1).